The primary structure comprises 601 residues: Elongation factor 4 (601 aa).

The tr-type G domain maps to 6-188 (NYIRNFSIVA…AIVTQLPSPR (183 aa)). Residues 18–23 (DHGKST) and 135–138 (NKVD) each bind GTP.

It belongs to the TRAFAC class translation factor GTPase superfamily. Classic translation factor GTPase family. LepA subfamily.

It localises to the cell inner membrane. It catalyses the reaction GTP + H2O = GDP + phosphate + H(+). Required for accurate and efficient protein synthesis under certain stress conditions. May act as a fidelity factor of the translation reaction, by catalyzing a one-codon backward translocation of tRNAs on improperly translocated ribosomes. Back-translocation proceeds from a post-translocation (POST) complex to a pre-translocation (PRE) complex, thus giving elongation factor G a second chance to translocate the tRNAs correctly. Binds to ribosomes in a GTP-dependent manner. This chain is Elongation factor 4, found in Bartonella henselae (strain ATCC 49882 / DSM 28221 / CCUG 30454 / Houston 1) (Rochalimaea henselae).